Consider the following 93-residue polypeptide: uncharacterized protein (93 aa).

The protein to B.subtilis YdcN C-terminal region.

This is an uncharacterized protein from Methanocaldococcus jannaschii (strain ATCC 43067 / DSM 2661 / JAL-1 / JCM 10045 / NBRC 100440) (Methanococcus jannaschii).